Consider the following 147-residue polypeptide: MMKLNLFINANETESYIDIHAPKMNDNVQSIINAVNDLDKSHTLVGYIDKEIHIINVSDVITFQVINKNVTAITSNQKFKLKLRLYELEKQLPQHFIRISKSEIVNKYYIEKLLLEPNGLIRMYLKDAHYTYSSRRYLKSIKERLSI.

Residues 44–147 (LVGYIDKEIH…LKSIKERLSI (104 aa)) form the HTH LytTR-type domain.

It is found in the cytoplasm. This is an uncharacterized protein from Staphylococcus aureus (strain COL).